Here is a 229-residue protein sequence, read N- to C-terminus: MKNLVILSGAGISAESGIKTFRDADGLWEGHDIMEVASPYGWKKNPQKVLDFYNQRRRQLFEVYPNKAHKALAELEKHYQVNIITQNVDDLHERAGSSRILHLHGELLSVRSEKDPNLVYRWEKDLNLGDLAKDKSQLRPDIVWFGEAVPLLKEAISLVKQAHLLIIIGTSLQVYPAASLYTHAHKDALIYYIDPKAKNAHLPQNVQCINESAVHAMQDLMPKLIEMAS.

The region spanning 1–227 (MKNLVILSGA…QDLMPKLIEM (227 aa)) is the Deacetylase sirtuin-type domain. NAD(+) is bound at residue 9-28 (GAGISAESGIKTFRDADGLW). Residues Y53 and R56 each coordinate substrate. NAD(+) is bound at residue 86-89 (QNVD). Residue H104 is the Proton acceptor of the active site. Position 169 to 171 (169 to 171 (GTS)) interacts with NAD(+).

This sequence belongs to the sirtuin family. Class III subfamily.

The protein resides in the cytoplasm. It catalyses the reaction N(6)-acetyl-L-lysyl-[protein] + NAD(+) + H2O = 2''-O-acetyl-ADP-D-ribose + nicotinamide + L-lysyl-[protein]. The catalysed reaction is N(6)-succinyl-L-lysyl-[protein] + NAD(+) + H2O = 2''-O-succinyl-ADP-D-ribose + nicotinamide + L-lysyl-[protein]. In terms of biological role, NAD-dependent lysine deacetylase and desuccinylase that specifically removes acetyl and succinyl groups on target proteins. Modulates the activities of several proteins which are inactive in their acylated form. The protein is NAD-dependent protein deacylase of Helicobacter pylori (strain ATCC 700392 / 26695) (Campylobacter pylori).